A 462-amino-acid chain; its full sequence is Glycoprotein endo-alpha-1,2-mannosidase (462 aa).

The Cytoplasmic segment spans residues 1-8 (MAKFRRGT). The chain crosses the membrane as a helical; Signal-anchor for type II membrane protein span at residues 9-29 (CIILALFILFIFSLMMGLKML). At 30–462 (RPNTATFGAP…YALDHQLPVS (433 aa)) the chain is on the lumenal side. The segment at 60 to 462 (DFQKSDRINS…YALDHQLPVS (403 aa)) is catalytic.

This sequence belongs to the glycosyl hydrolase 99 family. In terms of processing, undergoes proteolytic cleavage in the C-terminal region.

It is found in the golgi apparatus membrane. It catalyses the reaction N-{alpha-Glc-(1-&gt;3)-alpha-Man-(1-&gt;2)-alpha-Man-(1-&gt;2)-alpha-Man-(1-&gt;3)-[alpha-Man-(1-&gt;2)-alpha-Man-(1-&gt;3)-[alpha-Man-(1-&gt;2)-alpha-Man-(1-&gt;6)]-alpha-Man-(1-&gt;6)]-beta-Man-(1-&gt;4)-beta-GlcNAc-(1-&gt;4)-beta-GlcNAc}-L-asparaginyl-[protein] + H2O = alpha-D-glucosyl-(1-&gt;3)-D-mannopyranose + N(4)-{alpha-D-Man-(1-&gt;2)-alpha-D-Man-(1-&gt;3)-[alpha-D-Man-(1-&gt;2)-alpha-D-Man-(1-&gt;3)-[alpha-D-Man-(1-&gt;2)-alpha-D-Man-(1-&gt;6)]-alpha-D-Man-(1-&gt;6)]-beta-D-Man-(1-&gt;4)-beta-D-GlaNAc-(1-&gt;4)-beta-D-GlcNAc}-L-asparaginyl-[protein] (N-glucan mannose isomer 8A1,2,3B1,2). This chain is Glycoprotein endo-alpha-1,2-mannosidase (MANEA), found in Pongo abelii (Sumatran orangutan).